The sequence spans 452 residues: Exodeoxyribonuclease 7 large subunit (452 aa).

The protein belongs to the XseA family. As to quaternary structure, heterooligomer composed of large and small subunits.

Its subcellular location is the cytoplasm. The catalysed reaction is Exonucleolytic cleavage in either 5'- to 3'- or 3'- to 5'-direction to yield nucleoside 5'-phosphates.. Bidirectionally degrades single-stranded DNA into large acid-insoluble oligonucleotides, which are then degraded further into small acid-soluble oligonucleotides. In Bacillus cereus (strain B4264), this protein is Exodeoxyribonuclease 7 large subunit.